Consider the following 431-residue polypeptide: Probable carboxylic ester hydrolase LipM (431 aa).

Helical transmembrane passes span 7 to 27 (IHVIRQIGALVVAAVTAAATI), 38 to 58 (FASLWSWFIGLVVTEFPLPTL), and 75 to 95 (PVRAVSWLVAAFSALGLLNLS). Catalysis depends on residues S261, D357, and H390.

Belongs to the 'GDXG' lipolytic enzyme family.

Its subcellular location is the membrane. This chain is Probable carboxylic ester hydrolase LipM, found in Mycobacterium tuberculosis (strain ATCC 25618 / H37Rv).